A 427-amino-acid polypeptide reads, in one-letter code: Flotillin-1 (427 aa).

3 positions are modified to phosphoserine: serine 19, serine 163, and serine 385. Phosphothreonine is present on threonine 387.

It belongs to the band 7/mec-2 family. Flotillin subfamily. As to quaternary structure, heterooligomeric complex of flotillin-1 and flotillin-2 and caveolin-1 and caveolin-2. Interacts with ECPAS.

The protein resides in the cell membrane. It is found in the endosome. The protein localises to the membrane. It localises to the caveola. Its subcellular location is the melanosome. The protein resides in the membrane raft. In terms of biological role, may act as a scaffolding protein within caveolar membranes, functionally participating in formation of caveolae or caveolae-like vesicles. In Macaca mulatta (Rhesus macaque), this protein is Flotillin-1 (FLOT1).